The sequence spans 598 residues: (+)-bornyl diphosphate synthase, chloroplastic (598 aa).

A chloroplast-targeting transit peptide spans 1–54; the sequence is MSIISMNVSILSKPLNCLHNLERRPSKALLVPCTAPTARLRASCSSKLQEAHQI. Arg314 contacts substrate. The Mg(2+) site is built by Asp351 and Asp355. The DDXXD motif motif lies at 351 to 355; the sequence is DDIYD. Position 493 (Arg493) interacts with substrate. Mg(2+) contacts are provided by Asp496, Thr500, and Glu504. Thr500 contacts substrate. Lys512 contacts substrate.

Belongs to the terpene synthase family. As to quaternary structure, homodimer. Mg(2+) serves as cofactor.

The protein localises to the plastid. The protein resides in the chloroplast. It carries out the reaction (2E)-geranyl diphosphate = (2S,4R)-bornyl diphosphate. The catalysed reaction is (2E)-geranyl diphosphate = (1R,4S)-camphene + diphosphate. It catalyses the reaction (2E)-geranyl diphosphate = (1R,5R)-alpha-pinene + diphosphate. The protein operates within terpene metabolism; (R)-camphor biosynthesis. Its function is as follows. Catalyzes the formation of the (+)-camphor precursor (+)-bornyl diphosphate from geranyl diphosphate. The enzyme also produces significant amounts of (+)-alpha-pinene, (+)-camphene, and (+-)-limonene. This is (+)-bornyl diphosphate synthase, chloroplastic from Salvia officinalis (Sage).